The sequence spans 395 residues: Elongation factor Tu (395 aa).

The 196-residue stretch at 10–205 folds into the tr-type G domain; it reads KPHVNIGTIG…VDSYIPLPPR (196 aa). Residues 19-26 form a G1 region; the sequence is GHVDHGKT. 19–26 lines the GTP pocket; sequence GHVDHGKT. Threonine 26 contacts Mg(2+). The interval 60 to 64 is G2; it reads GITIN. A G3 region spans residues 81–84; it reads DCPG. Residues 81–85 and 136–139 contribute to the GTP site; these read DCPGH and NKVD. Residues 136–139 are G4; it reads NKVD. A G5 region spans residues 174-176; the sequence is SAT.

The protein belongs to the TRAFAC class translation factor GTPase superfamily. Classic translation factor GTPase family. EF-Tu/EF-1A subfamily. As to quaternary structure, monomer.

Its subcellular location is the cytoplasm. It catalyses the reaction GTP + H2O = GDP + phosphate + H(+). In terms of biological role, GTP hydrolase that promotes the GTP-dependent binding of aminoacyl-tRNA to the A-site of ribosomes during protein biosynthesis. The sequence is that of Elongation factor Tu from Terrimonas ferruginea (Flavobacterium ferrugineum).